A 313-amino-acid polypeptide reads, in one-letter code: MFFTVRTLSNRTSHVLNCAFAQCRLLSSTASAKGVPRLIKAIQGSSKEPLTDLQLRLIGDNRYGEDSWFVSSTPKAETMGVADGVGGWRKLGIDAGVFARELMSHCSEFAEQAEYDGLNPRQLLIDSYDRLKNKRPCNVCGSSTACLVTLHRPDCTLHSANLGDSGFLVLRNGRVLHRSDEQLHCFNTPYQLTVPPHPAMDCVLRDSPEQAVSTHLPLQPGDLVLLATDGLFDNVPESMLINQLRALQGETRAEYLQQAANRLVDLAKTLSVSPTFQSPFALKARANNVDYGIGGKPDDITVILASLEVPDKL.

The PPM-type phosphatase domain occupies 47–307; that stretch reads KEPLTDLQLR…DDITVILASL (261 aa). Positions 83, 84, and 229 each coordinate Mn(2+).

This sequence belongs to the PP2C family. Requires Mg(2+) as cofactor. Mn(2+) is required as a cofactor.

It carries out the reaction O-phospho-L-seryl-[protein] + H2O = L-seryl-[protein] + phosphate. The enzyme catalyses O-phospho-L-threonyl-[protein] + H2O = L-threonyl-[protein] + phosphate. The polypeptide is Protein phosphatase PTC7 homolog fig (Drosophila virilis (Fruit fly)).